An 80-amino-acid chain; its full sequence is U19-lycotoxin-Ls1a (80 aa).

The N-terminal stretch at 1-22 (MSPKVQALIFIVGLITLLAAHA) is a signal peptide. Residues 23-34 (QEELSDNTESER) constitute a propeptide that is removed on maturation. 4 disulfides stabilise this stretch: cysteine 36–cysteine 50, cysteine 43–cysteine 55, cysteine 49–cysteine 66, and cysteine 57–cysteine 64.

Belongs to the neurotoxin 02 (plectoxin) family. 05 (U19-lycotoxin) subfamily. As to expression, expressed by the venom gland.

The protein resides in the secreted. This chain is U19-lycotoxin-Ls1a, found in Lycosa singoriensis (Wolf spider).